The primary structure comprises 186 residues: Probable nicotinate-nucleotide adenylyltransferase (186 aa).

Belongs to the NadD family.

It carries out the reaction nicotinate beta-D-ribonucleotide + ATP + H(+) = deamido-NAD(+) + diphosphate. It participates in cofactor biosynthesis; NAD(+) biosynthesis; deamido-NAD(+) from nicotinate D-ribonucleotide: step 1/1. In terms of biological role, catalyzes the reversible adenylation of nicotinate mononucleotide (NaMN) to nicotinic acid adenine dinucleotide (NaAD). The protein is Probable nicotinate-nucleotide adenylyltransferase of Tropheryma whipplei (strain Twist) (Whipple's bacillus).